Consider the following 467-residue polypeptide: Transcription factor TGAL7 (467 aa).

Basic and acidic residues predominate over residues 1 to 10 (MGGSREEDRQ). Disordered stretches follow at residues 1–42 (MGGS…KESS) and 105–184 (QLQV…KTLR). Residues 25–41 (SSSPTTMIASSSMSKES) are compositionally biased toward low complexity. A compositionally biased stretch (polar residues) spans 120–129 (QGGQKINSSV). Basic and acidic residues predominate over residues 145–157 (KDNKNSSLIKKEG). Residues 158–168 (SSSGKGATTSN) show a composition bias toward polar residues. A compositionally biased stretch (basic and acidic residues) spans 169–182 (DPEREGRRTLDPKT). Positions 179 to 223 (DPKTLRRLAQNREAARKSRLRKKAYIQQLESSRIRLSQLEQQVHV) constitute a bZIP domain. The interval 181–201 (KTLRRLAQNREAARKSRLRKK) is basic motif. The segment at 207 to 221 (LESSRIRLSQLEQQV) is leucine-zipper. Positions 247-458 (ASLFDLEYGR…RALSTLWVAR (212 aa)) constitute a DOG1 domain.

The protein belongs to the bZIP family. Interacts with NPR5/NH4, NH5.1 and NH5.2.

It localises to the nucleus. Functionally, transcriptional regulator involved in defense response. This chain is Transcription factor TGAL7, found in Oryza sativa subsp. japonica (Rice).